The following is a 394-amino-acid chain: Probable nucleoredoxin 2 (394 aa).

2 consecutive Thioredoxin domains span residues 15-176 and 180-327; these read GVGG…QTLE and SVSG…EMED.

The protein belongs to the nucleoredoxin family.

It catalyses the reaction [protein]-dithiol + NAD(+) = [protein]-disulfide + NADH + H(+). It carries out the reaction [protein]-dithiol + NADP(+) = [protein]-disulfide + NADPH + H(+). In terms of biological role, probable thiol-disulfide oxidoreductase that may participate in various redox reactions. In Oryza sativa subsp. japonica (Rice), this protein is Probable nucleoredoxin 2.